Consider the following 205-residue polypeptide: Adenylate kinase (205 aa).

G11–T16 is an ATP binding site. The tract at residues S31 to V60 is NMP. AMP-binding positions include T32, R37, D58–V60, G86–R89, and Q93. An LID region spans residues K127–D137. R128 is a binding site for ATP. Positions 134 and 145 each coordinate AMP. Position 173 (G173) interacts with ATP.

Belongs to the adenylate kinase family. In terms of assembly, monomer.

The protein resides in the cytoplasm. It carries out the reaction AMP + ATP = 2 ADP. It participates in purine metabolism; AMP biosynthesis via salvage pathway; AMP from ADP: step 1/1. Its function is as follows. Catalyzes the reversible transfer of the terminal phosphate group between ATP and AMP. Plays an important role in cellular energy homeostasis and in adenine nucleotide metabolism. The chain is Adenylate kinase from Micrococcus luteus (strain ATCC 4698 / DSM 20030 / JCM 1464 / CCM 169 / CCUG 5858 / IAM 1056 / NBRC 3333 / NCIMB 9278 / NCTC 2665 / VKM Ac-2230) (Micrococcus lysodeikticus).